Consider the following 175-residue polypeptide: Nucleoplasmin-3 (175 aa).

Residue Ala2 is modified to N-acetylalanine. A Phosphoserine modification is found at Ser16. Arg27 carries the omega-N-methylarginine modification. Ser147 and Ser151 each carry phosphoserine.

This sequence belongs to the nucleoplasmin family. Interacts with NPM (via N-terminus). Forms a pentamer with NPM at a ratio 4:1 (NPM3/NPM). Two pentamers form a decamer. In terms of processing, phosphorylated. As to expression, predominantly expressed in testis.

The protein resides in the nucleus. The protein localises to the nucleolus. Its function is as follows. Plays a role in the regulation of diverse cellular processes such as ribosome biogenesis, chromatin remodeling or protein chaperoning. Modulates the histone chaperone function and the RNA-binding activity of nucleolar phosphoprotein B23/NPM. Efficiently mediates chromatin remodeling when included in a pentamer containing NPM3 and NPM. The sequence is that of Nucleoplasmin-3 (Npm3) from Mus musculus (Mouse).